Consider the following 468-residue polypeptide: Glutamate--tRNA ligase (468 aa).

Residues 8–18 (PSPTGFLHVGG) carry the 'HIGH' region motif. 4 residues coordinate Zn(2+): C97, C99, C124, and D126. The 'KMSKS' region signature appears at 236-240 (KLSKR). K239 is an ATP binding site.

The protein belongs to the class-I aminoacyl-tRNA synthetase family. Glutamate--tRNA ligase type 1 subfamily. As to quaternary structure, monomer. The cofactor is Zn(2+).

The protein localises to the cytoplasm. It catalyses the reaction tRNA(Glu) + L-glutamate + ATP = L-glutamyl-tRNA(Glu) + AMP + diphosphate. In terms of biological role, catalyzes the attachment of glutamate to tRNA(Glu) in a two-step reaction: glutamate is first activated by ATP to form Glu-AMP and then transferred to the acceptor end of tRNA(Glu). In Francisella tularensis subsp. novicida (strain U112), this protein is Glutamate--tRNA ligase.